The chain runs to 260 residues: MLKSYRAVLVSLSLLFVFVLSGCSNAAPIDAHSTGIWDHYFVYPISFMIQFVAHHIPGASFGIAIIIMTLVIRSAMIPLAVSQYRSQAKMKKMQPELQKLKKKYGDVSKDLEKQKQYQKEMSELMKSGGWNPLAGCWPLLIQMPIFSALYYAISRTEEIRTSSFLWVNLGHADPYHILPIIAALTTFIQMKVFQSNITPGEQVQMLKMQQIMMPAMILFMGFAAPSGLVLYWITGNLFTMTQTIVLRKIMEREELQLQKA.

Residues 1–22 (MLKSYRAVLVSLSLLFVFVLSG) form the signal peptide. Cysteine 23 carries the N-palmitoyl cysteine lipid modification. The S-diacylglycerol cysteine moiety is linked to residue cysteine 23. Helical transmembrane passes span 29-49 (IDAHSTGIWDHYFVYPISFMI), 52-72 (VAHHIPGASFGIAIIIMTLVI), 133-153 (LAGCWPLLIQMPIFSALYYAI), 164-184 (FLWVNLGHADPYHILPIIAAL), and 213-233 (MPAMILFMGFAAPSGLVLYWI).

The protein belongs to the OXA1/ALB3/YidC family. Type 2 subfamily.

It localises to the cell membrane. Functionally, required for the insertion and/or proper folding and/or complex formation of integral membrane proteins into the membrane. Involved in integration of membrane proteins that insert both dependently and independently of the Sec translocase complex, as well as at least some lipoproteins. This chain is Membrane protein insertase YidC 1, found in Bacillus cereus (strain ATCC 14579 / DSM 31 / CCUG 7414 / JCM 2152 / NBRC 15305 / NCIMB 9373 / NCTC 2599 / NRRL B-3711).